A 201-amino-acid polypeptide reads, in one-letter code: Peptidyl-tRNA hydrolase (201 aa).

TRNA is bound at residue Y14. H19 acts as the Proton acceptor in catalysis. TRNA is bound by residues Y64, N66, and N112.

The protein belongs to the PTH family. In terms of assembly, monomer.

Its subcellular location is the cytoplasm. It catalyses the reaction an N-acyl-L-alpha-aminoacyl-tRNA + H2O = an N-acyl-L-amino acid + a tRNA + H(+). Its function is as follows. Hydrolyzes ribosome-free peptidyl-tRNAs (with 1 or more amino acids incorporated), which drop off the ribosome during protein synthesis, or as a result of ribosome stalling. In terms of biological role, catalyzes the release of premature peptidyl moieties from peptidyl-tRNA molecules trapped in stalled 50S ribosomal subunits, and thus maintains levels of free tRNAs and 50S ribosomes. The protein is Peptidyl-tRNA hydrolase of Rhodopseudomonas palustris (strain BisB18).